We begin with the raw amino-acid sequence, 247 residues long: Adenosylcobinamide-GDP ribazoletransferase (247 aa).

A run of 6 helical transmembrane segments spans residues 34-54, 59-79, 113-133, 138-158, 171-191, and 194-214; these read IVMF…IFIL, CGIP…TGGF, GGLA…ELAL, MLAA…LLMY, VFIG…AVIV, and VLLP…AIFI.

It belongs to the CobS family. It depends on Mg(2+) as a cofactor.

The protein localises to the cell inner membrane. It catalyses the reaction alpha-ribazole + adenosylcob(III)inamide-GDP = adenosylcob(III)alamin + GMP + H(+). The enzyme catalyses alpha-ribazole 5'-phosphate + adenosylcob(III)inamide-GDP = adenosylcob(III)alamin 5'-phosphate + GMP + H(+). It functions in the pathway cofactor biosynthesis; adenosylcobalamin biosynthesis; adenosylcobalamin from cob(II)yrinate a,c-diamide: step 7/7. Joins adenosylcobinamide-GDP and alpha-ribazole to generate adenosylcobalamin (Ado-cobalamin). Also synthesizes adenosylcobalamin 5'-phosphate from adenosylcobinamide-GDP and alpha-ribazole 5'-phosphate. The polypeptide is Adenosylcobinamide-GDP ribazoletransferase (Salmonella schwarzengrund (strain CVM19633)).